The following is a 163-amino-acid chain: Ribonuclease H (163 aa).

One can recognise an RNase H type-1 domain in the interval 1-142; the sequence is MRKQVAIFTD…CDELARTAAC (142 aa). Residues Asp10, Glu48, Asp70, and Asp134 each coordinate Mg(2+).

This sequence belongs to the RNase H family. Monomer. Requires Mg(2+) as cofactor.

Its subcellular location is the cytoplasm. It catalyses the reaction Endonucleolytic cleavage to 5'-phosphomonoester.. In terms of biological role, endonuclease that specifically degrades the RNA of RNA-DNA hybrids. In Sodalis glossinidius (strain morsitans), this protein is Ribonuclease H.